The following is a 158-amino-acid chain: Endoribonuclease YbeY (158 aa).

Residues His-119, His-123, and Asp-129 each coordinate Zn(2+).

This sequence belongs to the endoribonuclease YbeY family. It depends on Zn(2+) as a cofactor.

The protein resides in the cytoplasm. Single strand-specific metallo-endoribonuclease involved in late-stage 70S ribosome quality control and in maturation of the 3' terminus of the 16S rRNA. This Chlamydia pneumoniae (Chlamydophila pneumoniae) protein is Endoribonuclease YbeY.